A 507-amino-acid chain; its full sequence is Histidine ammonia-lyase (507 aa).

A cross-link (5-imidazolinone (Ala-Gly)) is located at residues 141-143 (ASG). S142 carries the 2,3-didehydroalanine (Ser) modification.

Belongs to the PAL/histidase family. Post-translationally, contains an active site 4-methylidene-imidazol-5-one (MIO), which is formed autocatalytically by cyclization and dehydration of residues Ala-Ser-Gly.

The protein localises to the cytoplasm. The catalysed reaction is L-histidine = trans-urocanate + NH4(+). It functions in the pathway amino-acid degradation; L-histidine degradation into L-glutamate; N-formimidoyl-L-glutamate from L-histidine: step 1/3. The sequence is that of Histidine ammonia-lyase from Burkholderia ambifaria (strain MC40-6).